The sequence spans 308 residues: Oxygen-dependent coproporphyrinogen-III oxidase (308 aa).

Ser-100 is a binding site for substrate. The a divalent metal cation site is built by His-104 and His-114. The Proton donor role is filled by His-114. Residue 116-118 (NFR) participates in substrate binding. Positions 153 and 183 each coordinate a divalent metal cation. The important for dimerization stretch occupies residues 248 to 283 (YVEFNLVFDRGTIFGLQSGGRTESILSSMPPMATWK). Position 266–268 (266–268 (GGR)) interacts with substrate.

This sequence belongs to the aerobic coproporphyrinogen-III oxidase family. Homodimer. It depends on a divalent metal cation as a cofactor.

It is found in the cytoplasm. It carries out the reaction coproporphyrinogen III + O2 + 2 H(+) = protoporphyrinogen IX + 2 CO2 + 2 H2O. It functions in the pathway porphyrin-containing compound metabolism; protoporphyrin-IX biosynthesis; protoporphyrinogen-IX from coproporphyrinogen-III (O2 route): step 1/1. In terms of biological role, involved in the heme biosynthesis. Catalyzes the aerobic oxidative decarboxylation of propionate groups of rings A and B of coproporphyrinogen-III to yield the vinyl groups in protoporphyrinogen-IX. This chain is Oxygen-dependent coproporphyrinogen-III oxidase, found in Francisella tularensis subsp. holarctica (strain FTNF002-00 / FTA).